Reading from the N-terminus, the 150-residue chain is Ribonuclease H (150 aa).

Positions 1–141 (MRPVIIHTDG…ADQLARDGLT (141 aa)) constitute an RNase H type-1 domain. Mg(2+) contacts are provided by aspartate 9, glutamate 47, aspartate 69, and aspartate 133.

It belongs to the RNase H family. Monomer. Requires Mg(2+) as cofactor.

Its subcellular location is the cytoplasm. It catalyses the reaction Endonucleolytic cleavage to 5'-phosphomonoester.. In terms of biological role, endonuclease that specifically degrades the RNA of RNA-DNA hybrids. The polypeptide is Ribonuclease H (Rhodopseudomonas palustris (strain BisB5)).